A 104-amino-acid chain; its full sequence is L-rhamnose mutarotase (104 aa).

Substrate is bound at residue tyrosine 18. The active-site Proton donor is histidine 22. Substrate contacts are provided by residues tyrosine 41 and 76–77 (WW).

This sequence belongs to the rhamnose mutarotase family. Homodimer.

It is found in the cytoplasm. It carries out the reaction alpha-L-rhamnose = beta-L-rhamnose. The protein operates within carbohydrate metabolism; L-rhamnose metabolism. Involved in the anomeric conversion of L-rhamnose. The polypeptide is L-rhamnose mutarotase (Escherichia coli O17:K52:H18 (strain UMN026 / ExPEC)).